The primary structure comprises 525 residues: MNCAISGEVPVEPVVSTKSGLLFERRLIERHISDYGKCPVTGEPLTIDDIVPIKTGEIIKPKTLHTASIPGLLGTFQNEWDGLMLSNFALEQQLHTARQELSHALYQHDSACRVIARLKKERDEARQLLAEVERHIPAAPEAVTANAALSNGKRAAVDEELGPDAKKLCPGISAEIITELTDCNAALSQKRKKRQIPQTLASIDTLERFTQLSSHPLHKTNKPGICSMDILHSKDVIATGGVDATAVLFDRPSGQILSTLTGHSKKVTSVKFVGDSDLVLTASADKTVRIWRNPGDGNYACGYTLNDHSAEVRAVTVHPTNKYFVSASLDGTWCFYDLSSGSCLAQVSDDSKNVDYTAAAFHPDGLILGTGTSQSVVKIWDVKSQANVAKFDGHTGEVTAISFSENGYFLATAAEDGVRLWDLRKLRNFKSFLSADANSVEFDPSGSYLGIAASDIKVYQTASVKAEWNLIKTLPDLSGTGKATCVKFGSDAQYVAVGSMDRNLRIFGLPGDEKANVDDDSAQDS.

In terms of domain architecture, U-box spans 1–70; sequence MNCAISGEVP…PKTLHTASIP (70 aa). WD repeat units follow at residues 220 to 261, 262 to 301, 307 to 346, 351 to 390, 393 to 431, 433 to 469, and 478 to 517; these read TNKP…STLT, GHSK…NYAC, DHSA…CLAQ, SKNV…NVAK, GHTG…NFKS, LSAD…AEWN, and SGTG…KANV. The short motif at 409 to 424 is the DWD box element; sequence FLATAAEDGVRLWDLR.

It belongs to the WD repeat PRP19 family. In terms of assembly, homotetramer. Component of the multiprotein assembly MOS4-associated complex (MAC) at least composed of MOS4, CDC5, PRL1 and PRP19 which is related to the PRP19C/Prp19 complex/NTC/Nineteen complex identified in other organisms. Associated with the spliceosome.

It localises to the nucleus. The enzyme catalyses S-ubiquitinyl-[E2 ubiquitin-conjugating enzyme]-L-cysteine + [acceptor protein]-L-lysine = [E2 ubiquitin-conjugating enzyme]-L-cysteine + N(6)-ubiquitinyl-[acceptor protein]-L-lysine.. Its pathway is protein modification; protein ubiquitination. Functionally, probable ubiquitin-protein ligase which is mainly involved pre-mRNA splicing and DNA repair. Component of the MAC complex that probably regulates defense responses through transcriptional control and thereby is essential for plant innate immunity. This Arabidopsis thaliana (Mouse-ear cress) protein is Pre-mRNA-processing factor 19 homolog 2 (PRP19B).